Consider the following 385-residue polypeptide: Succinate--CoA ligase [ADP-forming] subunit beta (385 aa).

Residues 9-241 (KELLRDFGIN…IDEEEPSELE (233 aa)) enclose the ATP-grasp domain. Residues Lys-46, 53–55 (GRG), Glu-99, Thr-102, and Glu-107 each bind ATP. 2 residues coordinate Mg(2+): Asn-196 and Asp-210. Substrate contacts are provided by residues Asn-261 and 318–320 (GIV).

This sequence belongs to the succinate/malate CoA ligase beta subunit family. As to quaternary structure, heterotetramer of two alpha and two beta subunits. Mg(2+) serves as cofactor.

It carries out the reaction succinate + ATP + CoA = succinyl-CoA + ADP + phosphate. It catalyses the reaction GTP + succinate + CoA = succinyl-CoA + GDP + phosphate. The protein operates within carbohydrate metabolism; tricarboxylic acid cycle; succinate from succinyl-CoA (ligase route): step 1/1. In terms of biological role, succinyl-CoA synthetase functions in the citric acid cycle (TCA), coupling the hydrolysis of succinyl-CoA to the synthesis of either ATP or GTP and thus represents the only step of substrate-level phosphorylation in the TCA. The beta subunit provides nucleotide specificity of the enzyme and binds the substrate succinate, while the binding sites for coenzyme A and phosphate are found in the alpha subunit. This is Succinate--CoA ligase [ADP-forming] subunit beta from Campylobacter fetus subsp. fetus (strain 82-40).